We begin with the raw amino-acid sequence, 501 residues long: Type B diterpene cyclase (501 aa).

The protein belongs to the terpene synthase family. Monomer. Mg(2+) serves as cofactor.

The catalysed reaction is geranylgeranyl diphosphate = tuberculosinyl diphosphate. With respect to regulation, strongly inhibited by 15-aza-dihydrogeranylgeraniol and 5-isopropyl-N,N,N,2-tetramethyl-4-(piperidine-1-carbonyloxy)benzenaminium chloride (Amo-1618). Inhibited by GGPP concentrations higher than 50 uM. Its function is as follows. Catalyzes the formation of tuberculosinyl diphosphate from geranylgeranyl diphosphate (GGPP). It could also react with (14R/S)-14,15-oxidoGGPP to generate 3alpha- and 3beta-hydroxytuberculosinyl diphosphate. This chain is Type B diterpene cyclase, found in Mycobacterium tuberculosis (strain ATCC 25618 / H37Rv).